Reading from the N-terminus, the 480-residue chain is Adenosylhomocysteinase (480 aa).

The substrate site is built by threonine 63, aspartate 142, and glutamate 203. 204–206 (TTT) is a binding site for NAD(+). Substrate is bound by residues lysine 233 and aspartate 237. NAD(+) is bound by residues asparagine 238, 267–272 (GYGDVG), glutamate 290, asparagine 325, 346–348 (IGH), and asparagine 394.

Belongs to the adenosylhomocysteinase family. Requires NAD(+) as cofactor.

Its subcellular location is the cytoplasm. The enzyme catalyses S-adenosyl-L-homocysteine + H2O = L-homocysteine + adenosine. It participates in amino-acid biosynthesis; L-homocysteine biosynthesis; L-homocysteine from S-adenosyl-L-homocysteine: step 1/1. In terms of biological role, may play a key role in the regulation of the intracellular concentration of adenosylhomocysteine. The protein is Adenosylhomocysteinase of Xylella fastidiosa (strain M12).